The sequence spans 974 residues: Valine--tRNA ligase, chloroplastic/mitochondrial 2 (974 aa).

Residues Pro-109–His-119 carry the 'HIGH' region motif. The LRR 1 repeat unit spans residues Leu-432–Lys-454. Residues Glu-489–Asp-518 adopt a coiled-coil conformation. The 'KMSKS' region signature appears at Lys-598–Ser-602. Lys-601 is an ATP binding site. An LRR 2 repeat occupies Leu-857 to Leu-880.

Belongs to the class-I aminoacyl-tRNA synthetase family.

It is found in the plastid. Its subcellular location is the chloroplast. The protein localises to the mitochondrion. It catalyses the reaction tRNA(Val) + L-valine + ATP = L-valyl-tRNA(Val) + AMP + diphosphate. This chain is Valine--tRNA ligase, chloroplastic/mitochondrial 2, found in Arabidopsis thaliana (Mouse-ear cress).